The chain runs to 676 residues: MACSTLSKSPKDKIDPRDLLIPLILFLSLKGARSAAPGSSPHQVYNITWEVTNGDRETVWAISGNHPLWTWWPDLTPDLCMLALSGPPHWGLEYRAPYSSPPGPPCCSGSSGNRAGCARDCDEPLTSLTPRCNTAWNRLKLDQVTHKSSGGFYVCPGSHRPRKAKSCGGPDSFYCASWGCETTGRAYWKPSSSWDYITVDNNLTTNQAAQVCKDNKWCNPLAIQFTNAGKQVTSWTIGHYWGLRLYVSGQDPGLTFGIRLKYQNLGPRVPIGPNPVLADQLSFPLPNPLPKPAKSPSASNSTPTLISPSPAPTQPPPAGTGDRLLNLVQGAYQALNLTNPDKTQECWLCLVSAPPYYEGVAVLGTYSNHTSAPANCSAGSQHKLTLSEVTGQGLCIGTVPKTHQALCNTTLKTGKGSYYLVAPAGTMWACNTGLTPCLSATVLNRTTDYCVLVELWPRVTYHPPSYVYSQFEKSYRHKREPVSLTLALLLGGLTMGGIAAGVGTGTTALVATQQFQQLHAAVQDDLKEVEKSITNLEKSLTSLSEVVLQNRRGLDLLFLKEGGLCAALKEECCFYADHTGLVRDSMAKLRERLTQRQKLFESSQGWFEGLFNRSPWFTTLISTIMGPLIILLLILLFGPCILNRLVQFVKDRISVVQALVLTQQYHQLKPLEYEPQ.

The first 34 residues, 1 to 34 (MACSTLSKSPKDKIDPRDLLIPLILFLSLKGARS), serve as a signal peptide directing secretion. The tract at residues 35–270 (AAPGSSPHQV…KYQNLGPRVP (236 aa)) is receptor-binding domain (RBD). At 35–620 (AAPGSSPHQV…FNRSPWFTTL (586 aa)) the chain is on the extracellular side. The N-linked (GlcNAc...) asparagine; by host glycan is linked to Asn46. 5 disulfide bridges follow: Cys80–Cys132, Cys106–Cys121, Cys107–Cys117, Cys155–Cys175, and Cys167–Cys180. His89 serves as a coordination point for Zn(2+). Position 120 (Asp120) interacts with Zn(2+). N-linked (GlcNAc...) asparagine; by host glycosylation is present at Asn202. Cys212 and Cys218 are disulfide-bonded. A disordered region spans residues 287 to 322 (NPLPKPAKSPSASNSTPTLISPSPAPTQPPPAGTGD). Residues 294-308 (KSPSASNSTPTLISP) are compositionally biased toward low complexity. Positions 309–318 (SPAPTQPPPA) are enriched in pro residues. An N-linked (GlcNAc...) asparagine; by host glycan is attached at Asn336. Disulfide bonds link Cys346-Cys349, Cys346-Cys573, Cys376-Cys430, Cys395-Cys407, Cys437-Cys450, and Cys565-Cys572. The CXXC motif lies at 346–349 (CWLC). Residues Asn368 and Asn375 are each glycosylated (N-linked (GlcNAc...) asparagine; by host). N-linked (GlcNAc...) asparagine; by host glycans are attached at residues Asn408 and Asn444. Positions 482-502 (VSLTLALLLGGLTMGGIAAGV) are fusion peptide. Residues 513 to 547 (QQFQQLHAAVQDDLKEVEKSITNLEKSLTSLSEVV) adopt a coiled-coil conformation. The immunosuppression stretch occupies residues 548–564 (LQNRRGLDLLFLKEGGL). A CX6CC motif is present at residues 565–573 (CAALKEECC). A helical membrane pass occupies residues 621-641 (ISTIMGPLIILLLILLFGPCI). The S-palmitoyl cysteine; by host moiety is linked to residue Cys640. The Cytoplasmic segment spans residues 642–676 (LNRLVQFVKDRISVVQALVLTQQYHQLKPLEYEPQ). The short motif at 665 to 668 (YHQL) is the YXXL motif; contains endocytosis signal element.

The mature envelope protein (Env) consists of a trimer of SU-TM heterodimers attached by a labile interchain disulfide bond. In terms of processing, specific enzymatic cleavages in vivo yield mature proteins. Envelope glycoproteins are synthesized as an inactive precursor that is N-glycosylated and processed likely by host cell furin or by a furin-like protease in the Golgi to yield the mature SU and TM proteins. The cleavage site between SU and TM requires the minimal sequence [KR]-X-[KR]-R. The R-peptide is released from the C-terminus of the cytoplasmic tail of the TM protein upon particle formation as a result of proteolytic cleavage by the viral protease. Cleavage of this peptide is required for TM to become fusogenic. Post-translationally, the CXXC motif is highly conserved across a broad range of retroviral envelope proteins. It is thought to participate in the formation of a labile disulfide bond possibly with the CX6CC motif present in the transmembrane protein. Isomerization of the intersubunit disulfide bond to an SU intrachain disulfide bond is thought to occur upon receptor recognition in order to allow membrane fusion. The transmembrane protein is palmitoylated. In terms of processing, the R-peptide is palmitoylated.

The protein localises to the virion membrane. The protein resides in the host cell membrane. The surface protein (SU) attaches the virus to the host cell by binding to its receptor. This interaction triggers the refolding of the transmembrane protein (TM) and is thought to activate its fusogenic potential by unmasking its fusion peptide. Fusion occurs at the host cell plasma membrane. Its function is as follows. The transmembrane protein (TM) acts as a class I viral fusion protein. Under the current model, the protein has at least 3 conformational states: pre-fusion native state, pre-hairpin intermediate state, and post-fusion hairpin state. During viral and target cell membrane fusion, the coiled coil regions (heptad repeats) assume a trimer-of-hairpins structure, positioning the fusion peptide in close proximity to the C-terminal region of the ectodomain. The formation of this structure appears to drive apposition and subsequent fusion of viral and target cell membranes. Membranes fusion leads to delivery of the nucleocapsid into the cytoplasm. This Mus musculus (Mouse) protein is Envelope glycoprotein (env).